Reading from the N-terminus, the 601-residue chain is DNA ligase (601 aa).

D258 is a binding site for ATP. K260 acts as the N6-AMP-lysine intermediate in catalysis. Residues R265, R280, E310, F350, R427, and K433 each coordinate ATP. The interval 568-601 (DKSPEDATTTDEILEMYNKQPKKKIESPPIDESV) is disordered.

It belongs to the ATP-dependent DNA ligase family. Mg(2+) serves as cofactor.

The catalysed reaction is ATP + (deoxyribonucleotide)n-3'-hydroxyl + 5'-phospho-(deoxyribonucleotide)m = (deoxyribonucleotide)n+m + AMP + diphosphate.. Its function is as follows. DNA ligase that seals nicks in double-stranded DNA during DNA replication, DNA recombination and DNA repair. This chain is DNA ligase, found in Saccharolobus islandicus (strain L.S.2.15 / Lassen #1) (Sulfolobus islandicus).